The sequence spans 734 residues: MLQYCLLRRYRFLLRQHAQVIKRCYSGDIRNIGILAHIDAGKTTTTERMLFYAGKTRSLGEVHRGNTVTDYLAQERERGITICSSAVTFNWNGKRINLLDTPGHIDFTMEVEQSLYAVDGVIVVLDGTAGVEAQTVTVWTQADKHKLPRLVFVNKMDRPDANFEKCIVDLTEKLDAKPICTQYPTKSADGQLGIFDVITMEQMTWQQNDLGRNYSKVKLESSTELQEKRNELIDQLSGLDDELADVVISTESFDKVSNELIGQALRRATCQQKVVPVLLGSAYKNIGIQPLMDAVNAYLPMPEERNQMYDCFGNDFAGKVFKIVHDKQRGPLTLVRLLRGELKRGMRLLCSARGQAEVVSKIYEPLADEYREVGSMQAGDVAICAGLKSTVTGDLLTSSHTSLKNAQKRLLQSRGAAMPQDEDEVLDDASHELFSIEPKIPDAVYFCSIEPPSISSQTAMEQALKQLQREDPSLRVSYDSVTGQTVLGGMGELHMDIIKSRMLSEYKIDVDLGPLQIAYKETLGSSAITTLSVDKDIAGSKQSVSITLQLVSDQRELFSLDKSPENVQHLNALRPRILGVLRKGAVSALERGPRVGGQVVDTQIRLHNVTVGRGTADSFVMAAAAQCVQKLLITSGTRLLEPIMAIQIVAPNERISGIMADLSRRRALIRDVTSKGDRNKIILVNAPLAELSGYSSALRTISSGTASMTMQPCGFSEMNTADESLAVRRAQGLD.

The transit peptide at 1–25 (MLQYCLLRRYRFLLRQHAQVIKRCY) directs the protein to the mitochondrion. The region spanning 27–303 (GDIRNIGILA…AVNAYLPMPE (277 aa)) is the tr-type G domain. GTP is bound by residues 36–43 (AHIDAGKT), 100–104 (DTPGH), and 154–157 (NKMD).

The protein belongs to the TRAFAC class translation factor GTPase superfamily. Classic translation factor GTPase family. EF-G/EF-2 subfamily.

Its subcellular location is the mitochondrion. Functionally, mitochondrial GTPase that mediates the disassembly of ribosomes from messenger RNA at the termination of mitochondrial protein biosynthesis. Not involved in the GTP-dependent ribosomal translocation step during translation elongation. This is Ribosome-releasing factor 2, mitochondrial from Drosophila grimshawi (Hawaiian fruit fly).